A 244-amino-acid polypeptide reads, in one-letter code: Capsid protein (244 aa).

Residues 1–24 (MSTSKRKRGDDANWNKRTTKKKPS) carry the Bipartite nuclear localization signal motif. The interval 1–39 (MSTSKRKRGDDANWNKRTTKKKPSSAGLKKAGSKAERPS) is disordered.

It belongs to the geminiviridae capsid protein family. As to quaternary structure, homomultimer. Interacts with the movement protein. Binds to single-stranded and double-stranded viral DNA.

It localises to the virion. The protein resides in the host nucleus. Encapsidates the viral genome into characteristic twinned ('geminate') particles. Binds the genomic viral ssDNA and shuttles it into and out of the cell nucleus. Plays a role in protection of the genome from degradation, virus acquisition and transmission by insect vectors, infectivity, and systemic movement. The CP of monopartite geminiviruses is absolutely essential for virus movement. The sequence is that of Capsid protein from Maize streak virus genotype B (isolate Tas) (MSV).